Reading from the N-terminus, the 478-residue chain is Cytochrome c-552 (478 aa).

An N-terminal signal peptide occupies residues 1–26; it reads MARKTLRARRFFSLIFPFFFITSVYA. Histidine 94 is a binding site for heme c. Residues cysteine 122, cysteine 125, and lysine 126 each contribute to the heme site. Heme c is bound by residues cysteine 160, cysteine 163, histidine 164, cysteine 209, cysteine 212, and histidine 213. 4 residues coordinate Ca(2+): glutamate 215, tyrosine 216, lysine 261, and glutamine 263. Tyrosine 216 is a substrate binding site. Histidine 264 is a substrate binding site. Residues histidine 275, cysteine 282, cysteine 285, histidine 286, histidine 301, cysteine 314, cysteine 317, histidine 318, and histidine 393 each contribute to the heme c site.

It belongs to the cytochrome c-552 family. Ca(2+) serves as cofactor. It depends on heme c as a cofactor.

The protein localises to the periplasm. The enzyme catalyses 6 Fe(III)-[cytochrome c] + NH4(+) + 2 H2O = 6 Fe(II)-[cytochrome c] + nitrite + 8 H(+). Its pathway is nitrogen metabolism; nitrate reduction (assimilation). In terms of biological role, catalyzes the reduction of nitrite to ammonia, consuming six electrons in the process. The protein is Cytochrome c-552 of Salmonella paratyphi C (strain RKS4594).